Here is a 184-residue protein sequence, read N- to C-terminus: ATP synthase subunit b, chloroplastic (184 aa).

Residues 29–49 (INLINLILVLGILFYYGKGVL) traverse the membrane as a helical segment.

The protein belongs to the ATPase B chain family. As to quaternary structure, F-type ATPases have 2 components, F(1) - the catalytic core - and F(0) - the membrane proton channel. F(1) has five subunits: alpha(3), beta(3), gamma(1), delta(1), epsilon(1). F(0) has four main subunits: a(1), b(1), b'(1) and c(10-14). The alpha and beta chains form an alternating ring which encloses part of the gamma chain. F(1) is attached to F(0) by a central stalk formed by the gamma and epsilon chains, while a peripheral stalk is formed by the delta, b and b' chains.

Its subcellular location is the plastid. It is found in the chloroplast thylakoid membrane. Functionally, f(1)F(0) ATP synthase produces ATP from ADP in the presence of a proton or sodium gradient. F-type ATPases consist of two structural domains, F(1) containing the extramembraneous catalytic core and F(0) containing the membrane proton channel, linked together by a central stalk and a peripheral stalk. During catalysis, ATP synthesis in the catalytic domain of F(1) is coupled via a rotary mechanism of the central stalk subunits to proton translocation. Component of the F(0) channel, it forms part of the peripheral stalk, linking F(1) to F(0). The sequence is that of ATP synthase subunit b, chloroplastic from Adiantum capillus-veneris (Maidenhair fern).